Consider the following 859-residue polypeptide: Probable potassium transporter 14 (859 aa).

A compositionally biased stretch (gly residues) spans 1 to 19; that stretch reads METRSGGSGSASGGGGGGR. A disordered region spans residues 1-69; it reads METRSGGSGS…SRGGCSDSDD (69 aa). Residues 1-112 are Cytoplasmic-facing; sequence METRSGGSGS…RHQEITVGRS (112 aa). The span at 54–65 shows a compositional bias: low complexity; sequence PAAASGSRGGCS. A helical transmembrane segment spans residues 113–133; sequence IVLAVQTLGVVFGDVGTSPLY. The Extracellular portion of the chain corresponds to 134-155; sequence AFDVMFNKYPITSKEDVLGALS. A helical transmembrane segment spans residues 156-176; the sequence is LVIYTLILIPLLKYTLIALWG. At 177-240 the chain is on the cytoplasmic side; the sequence is NDDGEGGTFA…RLETSSMLKK (64 aa). The chain crosses the membrane as a helical span at residues 241–261; the sequence is LLLMLVLFGTSMVIADGVVTP. Residues 262 to 275 are Extracellular-facing; the sequence is AMSVMSAVNGLKVG. The chain crosses the membrane as a helical span at residues 276–296; the sequence is ISSVNEGEVVMITVAVLIVLF. Residues 297 to 305 lie on the Cytoplasmic side of the membrane; the sequence is TLQRFGSSK. The chain crosses the membrane as a helical span at residues 306–326; that stretch reads VALAVGPALFIWFCCLAGIGI. At 327 to 359 the chain is on the extracellular side; it reads YNMKTYGSAVLQAFNPMYIYYYFERNPTQAWMS. Residues 360-380 traverse the membrane as a helical segment; the sequence is LGGCLLCATGSEAMFADLCYF. The Cytoplasmic segment spans residues 381–388; that stretch reads SVKSVQLT. Residues 389-409 form a helical membrane-spanning segment; sequence FVFLVLPCLLLGYLGQAAFLM. The Extracellular portion of the chain corresponds to 410–417; that stretch reads ENLTENQQ. Residue Asn411 is glycosylated (N-linked (GlcNAc...) asparagine). Residues 418–438 form a helical membrane-spanning segment; sequence VFFLSIPNQAFWPVVFIAILA. Residues 439-478 are Cytoplasmic-facing; the sequence is AIIASRTMTTAIFSTIKQATALGCFPRLKIIHTSRSFMGQ. Residues 479–499 traverse the membrane as a helical segment; it reads IYIPMMNWFLLVSCLAFVTMF. At 500 to 508 the chain is on the extracellular side; it reads GSINEIGNA. The helical transmembrane segment at 509–531 threads the bilayer; it reads YGIAELGVMMMTTVLVTIIMLLI. Residues 532–535 lie on the Cytoplasmic side of the membrane; that stretch reads WQIN. Residues 536–558 form a helical membrane-spanning segment; it reads IIVVLCFLTLSLGLELIFFSSVL. Residues 559–560 lie on the Extracellular side of the membrane; that stretch reads GS. The helical transmembrane segment at 561–581 threads the bilayer; the sequence is VADGSWVLLVFAAVLYLIMYI. The Cytoplasmic segment spans residues 582–859; that stretch reads WNYGTKLKYE…MMQVAMQYMV (278 aa). The interval 752–772 is disordered; the sequence is GVPPAEAAGTTEHPTIGSSMS. Positions 763-772 are enriched in polar residues; sequence EHPTIGSSMS.

This sequence belongs to the HAK/KUP transporter (TC 2.A.72.3) family.

Its subcellular location is the membrane. Functionally, high-affinity potassium transporter. This chain is Probable potassium transporter 14 (HAK14), found in Oryza sativa subsp. japonica (Rice).